The sequence spans 157 residues: 6,7-dimethyl-8-ribityllumazine synthase (157 aa).

Residues Phe30, 64–66, and 88–90 each bind 5-amino-6-(D-ribitylamino)uracil; these read ALE and CII. A (2S)-2-hydroxy-3-oxobutyl phosphate-binding site is contributed by 93–94; that stretch reads ET. The Proton donor role is filled by His96. Asn121 contributes to the 5-amino-6-(D-ribitylamino)uracil binding site. Arg135 is a (2S)-2-hydroxy-3-oxobutyl phosphate binding site.

This sequence belongs to the DMRL synthase family.

It catalyses the reaction (2S)-2-hydroxy-3-oxobutyl phosphate + 5-amino-6-(D-ribitylamino)uracil = 6,7-dimethyl-8-(1-D-ribityl)lumazine + phosphate + 2 H2O + H(+). It participates in cofactor biosynthesis; riboflavin biosynthesis; riboflavin from 2-hydroxy-3-oxobutyl phosphate and 5-amino-6-(D-ribitylamino)uracil: step 1/2. In terms of biological role, catalyzes the formation of 6,7-dimethyl-8-ribityllumazine by condensation of 5-amino-6-(D-ribitylamino)uracil with 3,4-dihydroxy-2-butanone 4-phosphate. This is the penultimate step in the biosynthesis of riboflavin. This Albidiferax ferrireducens (strain ATCC BAA-621 / DSM 15236 / T118) (Rhodoferax ferrireducens) protein is 6,7-dimethyl-8-ribityllumazine synthase.